The sequence spans 140 residues: Small ribosomal subunit protein uS12 (140 aa).

The disordered stretch occupies residues 1–44 (MPTFNQLVRKGRKTMEKNSQAPALQKGFNSLRKKTTDASAPQKR). A 3-methylthioaspartic acid modification is found at Asp102. Positions 120-140 (VAKRRQARSKYGAKRPKEAKK) are disordered. Residues 121–140 (AKRRQARSKYGAKRPKEAKK) are compositionally biased toward basic residues.

Belongs to the universal ribosomal protein uS12 family. As to quaternary structure, part of the 30S ribosomal subunit. Contacts proteins S8 and S17. May interact with IF1 in the 30S initiation complex.

Functionally, with S4 and S5 plays an important role in translational accuracy. In terms of biological role, interacts with and stabilizes bases of the 16S rRNA that are involved in tRNA selection in the A site and with the mRNA backbone. Located at the interface of the 30S and 50S subunits, it traverses the body of the 30S subunit contacting proteins on the other side and probably holding the rRNA structure together. The combined cluster of proteins S8, S12 and S17 appears to hold together the shoulder and platform of the 30S subunit. This chain is Small ribosomal subunit protein uS12, found in Lachnoclostridium phytofermentans (strain ATCC 700394 / DSM 18823 / ISDg) (Clostridium phytofermentans).